We begin with the raw amino-acid sequence, 675 residues long: Protein PALS1 (675 aa).

2 disordered regions span residues 1–34 and 51–78; these read MTTSHMNGHVTEESDSEVKNVDLASPEEHQKHRE and RRSAQLERIRQQQEDMRRRREEEGKKQE. The segment at 1–345 is required for the correct localization of PALS1 and PATJ at cell-cell contacts and the normal formation of tight junctions and adherens junctions; it reads MTTSHMNGHV…QQIKPPPAKE (345 aa). Basic and acidic residues-rich tracts occupy residues 10–34 and 54–78; these read VTEESDSEVKNVDLASPEEHQKHRE and AQLERIRQQQEDMRRRREEEGKKQE. A phosphoserine mark is found at serine 14 and serine 25. The interaction with PARD6B stretch occupies residues 21–140; the sequence is VDLASPEEHQ…LKHIQHTLVD (120 aa). Phosphoserine is present on residues serine 83 and serine 84. 2 L27 domains span residues 120–177 and 179–235; these read KILE…NKAS and PFPL…MQLE. An interaction with LIN7C region spans residues 181-243; it reads PLISNAQDLA…LEPITDERVY (63 aa). Residues 256 to 336 enclose the PDZ domain; it reads IVRIEKARDI…TLTFVLIPSQ (81 aa). The region spanning 345–417 is the SH3 domain; that stretch reads ETVIHVKAHF…PGKSFQQQRE (73 aa). The Guanylate kinase-like domain maps to 479-660; it reads KRPIILIGPQ…AYQELLRLIN (182 aa). 486-493 is an ATP binding site; that stretch reads GPQNCGQN.

This sequence belongs to the MAGUK family. Heterodimer with MPP1. Forms a heterotrimeric complex composed of PALS1, LIN7B and PATJ; the N-terminal L27 domain of PALS1 interacts with the L27 domain of PATJ and the C-terminal L27 domain of PALS1 interacts with the L27 domain of LIN7B. Component of a complex composed of PALS1, CRB1 and MPP4. Component of a complex whose core is composed of ARHGAP17, AMOT, PALS1, PATJ and PARD3/PAR3. Component of a complex composed of PALS1, CRB1 and EPB41L5. Within the complex, interacts (via HOOK domain) with EPB41L5 (via FERM domain), and interacts with CRB1 (via intracellular domain). Component of a complex composed of PALS1, MPP3 and CRB1; PALS1 acts as a bridging protein between MPP3 (via guanylate kinase-like domain) and CRB1. Component of a complex composed of CRB3, PALS1 and PATJ. As part of the Crumbs complex; interacts with WWP1, the interaction is enhanced by AMOTL2 and facilitates WWP1 localization to the plasma membrane. The Crumbs complex promotes monoubiquitination of AMOTL2 by WWP1, which activates the Hippo signaling pathway. Interacts (via PDZ domain) with PATJ (via N-terminus). Interacts with EZR. Interacts (via PDZ domain) with CRB1 (via C-terminal ERLI motif). While the PDZ domain is sufficient for interaction with CRB1, the adjacent SH3 and guanylate kinase-like domains are likely to contribute to a high affinity interaction. Interacts with WWTR1/TAZ (via WW domain). Interacts with MPP7. Interacts (via PDZ domain) with CRB3 (via C-terminus). Interacts with LIN7C. Interacts with MPDZ. Interacts with PARD6B. Interacts with SC6A1. Interacts with CDH5; the interaction promotes PALS1 localization to cell junctions and is required for CDH5-mediated vascular lumen formation and endothelial cell. Interacts with NPHP1 (via coiled coil and SH3 domains). Interacts with NPHP4. Interacts with CRB2. As to quaternary structure, (Microbial infection) Interacts (via PDZ domain) with human coronaviruses SARS-CoV and, probably, SARS-CoV-2 envelope small membrane protein E (via C-terminus); this inhibits the interaction between PALS1 and CRB3. Expressed at the outer limiting membrane in the retina (at protein level). Expressed in T lymphocytes (at protein level). Expressed in the kidney (at protein level).

It is found in the golgi apparatus. The protein localises to the cell membrane. The protein resides in the endomembrane system. It localises to the cell junction. Its subcellular location is the tight junction. It is found in the adherens junction. The protein localises to the cell projection. The protein resides in the axon. It localises to the perikaryon. Its subcellular location is the apical cell membrane. It is found in the endoplasmic reticulum-Golgi intermediate compartment. In terms of biological role, plays a role in tight junction biogenesis and in the establishment of cell polarity in epithelial cells. Also involved in adherens junction biogenesis by ensuring correct localization of the exocyst complex protein EXOC4/SEC8 which allows trafficking of adherens junction structural component CDH1 to the cell surface. Plays a role through its interaction with CDH5 in vascular lumen formation and endothelial membrane polarity. Required during embryonic and postnatal retinal development. Required for the maintenance of cerebellar progenitor cells in an undifferentiated proliferative state, preventing premature differentiation, and is required for cerebellar histogenesis, fissure formation, cerebellar layer organization and cortical development. Plays a role in neuronal progenitor cell survival, potentially via promotion of mTOR signaling. Plays a role in the radial and longitudinal extension of the myelin sheath in Schwann cells. May modulate SC6A1/GAT1-mediated GABA uptake by stabilizing the transporter. Plays a role in the T-cell receptor-mediated activation of NF-kappa-B. Required for localization of EZR to the apical membrane of parietal cells and may play a role in the dynamic remodeling of the apical cytoskeleton. Required for the normal polarized localization of the vesicular marker STX4. Required for the correct trafficking of the myelin proteins PMP22 and MAG. Involved in promoting phosphorylation and cytoplasmic retention of transcriptional coactivators YAP1 and WWTR1/TAZ which leads to suppression of TGFB1-dependent transcription of target genes such as CCN2/CTGF, SERPINE1/PAI1, SNAI1/SNAIL1 and SMAD7. (Microbial infection) Acts as an interaction partner for human coronaviruses SARS-CoV and, probably, SARS-CoV-2 envelope protein E which results in delayed formation of tight junctions and disregulation of cell polarity. The protein is Protein PALS1 of Homo sapiens (Human).